A 900-amino-acid chain; its full sequence is Translation initiation factor IF-2 (900 aa).

Positions 80 to 95 (LEEQSRKTVEKEDQLR) are enriched in basic and acidic residues. Disordered stretches follow at residues 80–106 (LEEQ…VPGR), 149–169 (AVEA…DSPV), and 221–268 (DEFD…VDEK). Residues 253 to 262 (GKKKGKKKKK) show a composition bias toward basic residues. Positions 397-567 (TRPPVVTIMG…LTEAEVRELK (171 aa)) constitute a tr-type G domain. The tract at residues 406-413 (GHVDHGKT) is G1. Residue 406 to 413 (GHVDHGKT) participates in GTP binding. A G2 region spans residues 431-435 (GITQH). The tract at residues 453–456 (DTPG) is G3. Residues 453–457 (DTPGH) and 507–510 (NKID) contribute to the GTP site. The interval 507–510 (NKID) is G4. Residues 543 to 545 (SAK) form a G5 region.

The protein belongs to the TRAFAC class translation factor GTPase superfamily. Classic translation factor GTPase family. IF-2 subfamily.

The protein resides in the cytoplasm. Functionally, one of the essential components for the initiation of protein synthesis. Protects formylmethionyl-tRNA from spontaneous hydrolysis and promotes its binding to the 30S ribosomal subunits. Also involved in the hydrolysis of GTP during the formation of the 70S ribosomal complex. This is Translation initiation factor IF-2 from Chlorobium phaeovibrioides (strain DSM 265 / 1930) (Prosthecochloris vibrioformis (strain DSM 265)).